Reading from the N-terminus, the 1701-residue chain is Merozoite surface protein 1 (1701 aa).

Positions 1–19 (MKIIFFLCSFLFFIINTQC) are cleaved as a signal peptide. Over residues 89-100 (GSGGSVASGGSG) the composition is skewed to gly residues. The disordered stretch occupies residues 89 to 118 (GSGGSVASGGSGNSRRTNPSDNSSDSNTKT). The span at 101–116 (NSRRTNPSDNSSDSNT) shows a compositional bias: low complexity. 2 N-linked (GlcNAc...) asparagine glycosylation sites follow: Asn110 and Asn239. The tract at residues 322-344 (DAENPTTGSKPNPLPENKKKEVE) is disordered. N-linked (GlcNAc...) asparagine glycosylation is found at Asn470, Asn536, and Asn607. Residues 704–739 (SETTEDGGHSTHTLSQSGETEVTEETEVTEETVGHT) form a disordered region. Positions 724–733 (EVTEETEVTE) are enriched in acidic residues. 7 N-linked (GlcNAc...) asparagine glycosylation sites follow: Asn802, Asn899, Asn919, Asn965, Asn991, Asn1089, and Asn1196. Residues 889 to 927 (TGTSSTSSPGNTTVNTAQSATHSNSQNQQSNASSTNTQN) show a composition bias toward low complexity. Residues 889–936 (TGTSSTSSPGNTTVNTAQSATHSNSQNQQSNASSTNTQNGVAVSSGPA) are disordered. Disordered regions lie at residues 1231–1259 (PPQP…TQIP) and 1451–1472 (KEKF…DEQK). The span at 1245-1259 (VSGSSGSTKEETQIP) shows a compositional bias: polar residues. Residues 1456–1465 (SSPPTTPPSP) show a composition bias toward pro residues. N-linked (GlcNAc...) asparagine glycosylation occurs at Asn1588. EGF-like domains lie at 1592–1632 (HQCV…VENP) and 1633–1680 (NPTC…IFCS). 6 cysteine pairs are disulfide-bonded: Cys1594/Cys1605, Cys1599/Cys1615, Cys1617/Cys1628, Cys1636/Cys1649, Cys1643/Cys1663, and Cys1665/Cys1679. Ser1680 is lipidated: GPI-anchor amidated serine. The propeptide at 1681-1701 (SSNFLGISFLLILMLILYSFI) is removed in mature form.

Forms a complex composed of subunits p83, p30, p38, and p42 which remain non-covalently associated; the complex is formed at the merozoite surface prior to egress from host erythrocytes. Forms a complex composed of processed MSP1 subunits, MSP6 subunit p36 and MSP7; the complex is formed at the merozoite surface prior to egress from host erythrocytes. Within the complex, interacts (via subunit p38) with MSP6 subunit p36 and (via subunits p83, p30 and p38) with MSP7 (via subunit p22). Forms a complex composed of MSP1, MSP6, DBLMSP1 and DBLMSP2. Within the complex, interacts (via subunit p38) with DBLMSP1 and DBLMSP2. Forms a complex composed of MSP1, and rhoptry proteins RhopH3, RAP1 and CLAG9/RhopH3. Within the complex, interacts (via subunits p42 and p19) with RhopH3 (via C-terminus). Forms a complex composed of MSP1, MSP6, MSP7, MSP9 and MSP3; within the complex, MSP6 and MSP9 mediate the binding to the host erythrocyte. Interacts (via subunits p19 and p42) with MSP9; the interaction is direct; MSP1 subunits p19 or p42, and MSP9 form a co-ligand complex that interacts with host SLC4A1/Band 3 protein. May interact with PFD6. Interacts with host spectrin. In terms of assembly, interacts with host glycophorin GYPA in a sialic acid-independent manner. As to quaternary structure, interacts with host proinflammatory cytokine S100P; the interaction blocks S100P inflammatory and chemotactic activities. Interacts with host SLC4A1/Band 3 (via 5ABC region) on the host erythrocyte surface in a sialic acid-independent manner. In terms of processing, the p190 precursor is cleaved by SUB1 prior to merozoite egress into 4 subunits p83, p30, p38, and p42 which remain non-covalently associated. SUB1-mediated proteolytic cleavage occurs in an orderly manner; the first cleavage occurs at the p30/p38 site, followed by cleavage at the p83/p30 site, in the 3D7 strain a second cleavage occurs at the N-terminus of p83, the last cleavage occurs at the p38/p42 site. The order of cleavage is essential for parasite viability. SUB1-mediated processing is essential for merozoite egress. In a second processing step during erythrocyte invasion, p42 is cleaved by SUB2 into p33 and p19; the latter remains attached to the merozoite surface via its GPI-anchor and is endocytosed during the subsequent ring stage.

It is found in the cell membrane. The protein localises to the secreted. It localises to the vacuole membrane. In terms of biological role, during the asexual blood stage, involved in merozoite egress from host erythrocytes possibly via its interaction with the host cytoskeleton protein spectrin resulting in the destabilization of the host cytoskeleton and thus leading to erythrocyte cell membrane rupture. Involved in the binding to host erythrocytes and is required for host erythrocyte invasion. Its function is as follows. By binding to host proinflammatory cytokine S100P may interfere with host immune responses. Functionally, involved in merozoite invasion of host erythrocytes. May play a role in the biogenesis and/or function of the food vacuole during the intraerythrocytic development. In Plasmodium falciparum (isolate FC27 / Papua New Guinea), this protein is Merozoite surface protein 1.